Here is a 185-residue protein sequence, read N- to C-terminus: Ribosome-recycling factor (185 aa).

Belongs to the RRF family.

Its subcellular location is the cytoplasm. Responsible for the release of ribosomes from messenger RNA at the termination of protein biosynthesis. May increase the efficiency of translation by recycling ribosomes from one round of translation to another. The protein is Ribosome-recycling factor of Thioalkalivibrio sulfidiphilus (strain HL-EbGR7).